The sequence spans 421 residues: 3-alpha-mycarosylerythronolide B desosaminyl transferase (421 aa).

An N-terminal signal peptide occupies residues 1–23; it reads MRVVFSSMASKSHLFGLVPLAWA.

The protein belongs to the glycosyltransferase 28 family. As to quaternary structure, heterotetramer composed of EryCII and EryCIII.

It carries out the reaction 3-O-alpha-L-mycarosylerythronolide B + dTDP-alpha-D-desosamine = erythromycin D + dTDP + H(+). It participates in antibiotic biosynthesis; erythromycin biosynthesis. In terms of biological role, catalyzes the conversion of alpha-L-mycarosylerythronolide B into erythromycin D in the erythromycin biosynthesis pathway. The sequence is that of 3-alpha-mycarosylerythronolide B desosaminyl transferase (eryCIII) from Saccharopolyspora erythraea (strain ATCC 11635 / DSM 40517 / JCM 4748 / NBRC 13426 / NCIMB 8594 / NRRL 2338).